The primary structure comprises 319 residues: Olfactory receptor 5B21 (319 aa).

The Extracellular portion of the chain corresponds to 1 to 26 (MTSMENITEVTEFILLGLTDDPNLQV). An N-linked (GlcNAc...) asparagine glycan is attached at Asn-6. The helical transmembrane segment at 27-47 (PLLLIFLFIYLVTLIGNGGMM) threads the bilayer. Residues 48–55 (VIIFSDSH) lie on the Cytoplasmic side of the membrane. Residues 56–76 (LHTPMYFFLSNLSFVDLGYSS) form a helical membrane-spanning segment. Topologically, residues 77–100 (AVAPKMVAALQSGNKVISYNGCAA) are extracellular. Cys-98 and Cys-190 are disulfide-bonded. The chain crosses the membrane as a helical span at residues 101–121 (QFFFFVGFATVECYLLASMAY). Residues 122–134 (DRHAAVCRPLHYT) are Cytoplasmic-facing. A helical transmembrane segment spans residues 135-155 (TTMTTGVCTILTIGSYTCGFL). Topologically, residues 156-197 (NASIHAADTFKLSFCGSNKINHFFCDIPPLLALACSSTHISK) are extracellular. The helical transmembrane segment at 198-218 (LVVFFVVGFNVFFTLLVIIIS) threads the bilayer. At 219–238 (YFFIYIAIQNMKSSEGRKKA) the chain is on the cytoplasmic side. The helical transmembrane segment at 239 to 259 (FSTCASHLTAVSIFYGTIIFM) threads the bilayer. Topologically, residues 260–272 (YLQPSSGQSMDTD) are extracellular. A helical transmembrane segment spans residues 273–293 (KIASVFYTVVIPMLNPLIYSL). The Cytoplasmic portion of the chain corresponds to 294–319 (RNREVKSALWKILNRFYPASFSVSRK).

It belongs to the G-protein coupled receptor 1 family.

The protein resides in the cell membrane. Odorant receptor. This is Olfactory receptor 5B21 from Mus musculus (Mouse).